The following is a 2378-amino-acid chain: Dimodular nonribosomal peptide synthase (2378 aa).

Carrier domains are found at residues 961-1036 (APRT…DLAQ) and 2036-2111 (GPRT…EMGS). Residues serine 996 and serine 2071 each carry the O-(pantetheine 4'-phosphoryl)serine modification.

The protein belongs to the ATP-dependent AMP-binding enzyme family. The cofactor is pantetheine 4'-phosphate.

It carries out the reaction holo-[peptidyl-carrier protein] + L-threonine + ATP = L-threonyl-[peptidyl-carrier protein] + AMP + diphosphate. It catalyses the reaction holo-[peptidyl-carrier protein] + glycine + ATP = glycyl-[peptidyl-carrier protein] + AMP + diphosphate. Its pathway is siderophore biosynthesis; bacillibactin biosynthesis. Functionally, specifically adenylates L-threonine and, to a lesser extent, glycine and covalently loads both amino acids onto their corresponding peptidyl carrier domains. The polypeptide is Dimodular nonribosomal peptide synthase (dhbF) (Bacillus subtilis (strain 168)).